The primary structure comprises 157 residues: Small ribosomal subunit protein uS7 (157 aa).

Belongs to the universal ribosomal protein uS7 family. Part of the 30S ribosomal subunit. Contacts proteins S9 and S11.

Its function is as follows. One of the primary rRNA binding proteins, it binds directly to 16S rRNA where it nucleates assembly of the head domain of the 30S subunit. Is located at the subunit interface close to the decoding center, probably blocks exit of the E-site tRNA. In Protochlamydia amoebophila (strain UWE25), this protein is Small ribosomal subunit protein uS7.